Here is a 97-residue protein sequence, read N- to C-terminus: Co-chaperonin GroES (97 aa).

Belongs to the GroES chaperonin family. As to quaternary structure, heptamer of 7 subunits arranged in a ring. Interacts with the chaperonin GroEL.

The protein localises to the cytoplasm. In terms of biological role, together with the chaperonin GroEL, plays an essential role in assisting protein folding. The GroEL-GroES system forms a nano-cage that allows encapsulation of the non-native substrate proteins and provides a physical environment optimized to promote and accelerate protein folding. GroES binds to the apical surface of the GroEL ring, thereby capping the opening of the GroEL channel. In Photorhabdus laumondii subsp. laumondii (strain DSM 15139 / CIP 105565 / TT01) (Photorhabdus luminescens subsp. laumondii), this protein is Co-chaperonin GroES.